A 436-amino-acid polypeptide reads, in one-letter code: GTPase Der (436 aa).

EngA-type G domains lie at 4 to 167 (PVVA…KNLP) and 176 to 351 (VQFC…ENHA). Residues 10–17 (GRPNVGKS), 57–61 (DTGGI), 119–122 (NKLD), 182–189 (GRPNVGKS), 229–233 (DTAGM), and 294–297 (NKWD) contribute to the GTP site. Residues 352 to 436 (MRVQTNILND…PIKIFARARK (85 aa)) form the KH-like domain.

The protein belongs to the TRAFAC class TrmE-Era-EngA-EngB-Septin-like GTPase superfamily. EngA (Der) GTPase family. In terms of assembly, associates with the 50S ribosomal subunit.

GTPase that plays an essential role in the late steps of ribosome biogenesis. The chain is GTPase Der from Bacillus pumilus (strain SAFR-032).